The following is a 249-amino-acid chain: Ribonuclease HII (249 aa).

An RNase H type-2 domain is found at 30–221; it reads GPVAGVDEVG…VRRLVMDGEP (192 aa). A divalent metal cation is bound by residues aspartate 36, glutamate 37, and aspartate 130.

It belongs to the RNase HII family. Requires Mn(2+) as cofactor. It depends on Mg(2+) as a cofactor.

It localises to the cytoplasm. The enzyme catalyses Endonucleolytic cleavage to 5'-phosphomonoester.. Endonuclease that specifically degrades the RNA of RNA-DNA hybrids. The chain is Ribonuclease HII from Mycolicibacterium vanbaalenii (strain DSM 7251 / JCM 13017 / BCRC 16820 / KCTC 9966 / NRRL B-24157 / PYR-1) (Mycobacterium vanbaalenii).